Here is a 648-residue protein sequence, read N- to C-terminus: Threonine--tRNA ligase (648 aa).

Residues 1–61 (MIKITFPNTS…NENASVKLYK (61 aa)) form the TGS domain. The tract at residues 243-542 (DHRRIGKEME…MIEHTGGKFP (300 aa)) is catalytic. Zn(2+)-binding residues include C338, H389, and H519.

This sequence belongs to the class-II aminoacyl-tRNA synthetase family. In terms of assembly, homodimer. Requires Zn(2+) as cofactor.

It localises to the cytoplasm. It carries out the reaction tRNA(Thr) + L-threonine + ATP = L-threonyl-tRNA(Thr) + AMP + diphosphate + H(+). Its function is as follows. Catalyzes the attachment of threonine to tRNA(Thr) in a two-step reaction: L-threonine is first activated by ATP to form Thr-AMP and then transferred to the acceptor end of tRNA(Thr). Also edits incorrectly charged L-seryl-tRNA(Thr). This Azobacteroides pseudotrichonymphae genomovar. CFP2 protein is Threonine--tRNA ligase.